We begin with the raw amino-acid sequence, 103 residues long: c-Myc-binding protein (103 aa).

It belongs to the AMY1 family. In terms of assembly, binds via its C-terminal region to the N-terminal region of MYC. Associates with AKAP1/S-AKAP84. Interacts with MYCBPAP. Interacts with CFAP91.

Its subcellular location is the cytoplasm. It is found in the nucleus. May control the transcriptional activity of MYC. Stimulates the activation of E box-dependent transcription by MYC. This chain is c-Myc-binding protein (MYCBP), found in Pongo abelii (Sumatran orangutan).